Reading from the N-terminus, the 180-residue chain is Crossover junction endodeoxyribonuclease RuvC (180 aa).

Catalysis depends on residues Asp7, Glu66, and Asp138. 3 residues coordinate Mg(2+): Asp7, Glu66, and Asp138.

It belongs to the RuvC family. As to quaternary structure, homodimer which binds Holliday junction (HJ) DNA. The HJ becomes 2-fold symmetrical on binding to RuvC with unstacked arms; it has a different conformation from HJ DNA in complex with RuvA. In the full resolvosome a probable DNA-RuvA(4)-RuvB(12)-RuvC(2) complex forms which resolves the HJ. The cofactor is Mg(2+).

It is found in the cytoplasm. It carries out the reaction Endonucleolytic cleavage at a junction such as a reciprocal single-stranded crossover between two homologous DNA duplexes (Holliday junction).. Functionally, the RuvA-RuvB-RuvC complex processes Holliday junction (HJ) DNA during genetic recombination and DNA repair. Endonuclease that resolves HJ intermediates. Cleaves cruciform DNA by making single-stranded nicks across the HJ at symmetrical positions within the homologous arms, yielding a 5'-phosphate and a 3'-hydroxyl group; requires a central core of homology in the junction. The consensus cleavage sequence is 5'-(A/T)TT(C/G)-3'. Cleavage occurs on the 3'-side of the TT dinucleotide at the point of strand exchange. HJ branch migration catalyzed by RuvA-RuvB allows RuvC to scan DNA until it finds its consensus sequence, where it cleaves and resolves the cruciform DNA. The polypeptide is Crossover junction endodeoxyribonuclease RuvC (Burkholderia orbicola (strain MC0-3)).